A 217-amino-acid polypeptide reads, in one-letter code: Oxygen regulatory protein NreC (217 aa).

The Response regulatory domain maps to 2–119 (KIVIADDHAV…QLLLAIRTVY (118 aa)). 4-aspartylphosphate is present on D53. An HTH luxR-type domain is found at 148-213 (TTDPFKILSK…ELVEYALKKK (66 aa)). Residues 172 to 191 (NKEIAEKLFVSVKTVEAHKT) constitute a DNA-binding region (H-T-H motif).

In terms of processing, phosphorylated by NreB.

The protein resides in the cytoplasm. In terms of biological role, member of the two-component regulatory system NreB/NreC involved in the control of dissimilatory nitrate/nitrite reduction in response to oxygen. Phosphorylated NreC binds to a GC-rich palindromic sequence at the promoters of the nitrate (narGHJI) and nitrite (nir) reductase operons, as well as the putative nitrate transporter gene narT, and activates their expression. The chain is Oxygen regulatory protein NreC (nreC) from Staphylococcus aureus (strain USA300 / TCH1516).